A 109-amino-acid polypeptide reads, in one-letter code: Latartoxin-2a (109 aa).

A signal peptide spans Met1–Ser19. The propeptide at Lys20–Arg37 is removed in mature form. A Processing quadruplet motif motif is present at residues Ser34–Arg37. 5 disulfides stabilise this stretch: Cys39–Cys56, Cys46–Cys67, Cys55–Cys81, Cys69–Cys79, and Cys72–Cys93. Residue Val108 is modified to Valine amide.

It belongs to the neurotoxin 19 (CSTX) family. 11 (latartoxin) subfamily. Post-translationally, contains 5 disulfide bonds. In terms of processing, cleavage of the propeptide depends on the processing quadruplet motif (XXXR, with at least one of X being E). In terms of tissue distribution, expressed by the venom gland.

The protein resides in the secreted. Insect toxin. Causes paralysis in larvae of C.vicina by depolarizing membranes at the neuromuscular junction. The polypeptide is Latartoxin-2a (Lachesana tarabaevi (Spider)).